The chain runs to 106 residues: Protamine (106 aa).

The segment at 1-106 is disordered; the sequence is ARAVRRRRAR…TRRRRRRARR (106 aa).

As to expression, sperm.

The protein resides in the nucleus. Its subcellular location is the chromosome. This chain is Protamine, found in Phorcus turbinatus (Sea snail).